The sequence spans 466 residues: Flagellum-specific ATP synthase (466 aa).

194–201 is an ATP binding site; sequence SSSGLGKS.

Belongs to the ATPase alpha/beta chains family.

Its subcellular location is the cytoplasm. It catalyses the reaction ATP + H2O + 4 H(+)(in) = ADP + phosphate + 5 H(+)(out). Probable catalytic subunit of a protein translocase for flagellum-specific export, or a proton translocase involved in local circuits at the flagellum. May be involved in a specialized protein export pathway that proceeds without signal peptide cleavage. The sequence is that of Flagellum-specific ATP synthase (fliI) from Buchnera aphidicola subsp. Schizaphis graminum (strain Sg).